The following is a 307-amino-acid chain: Probable protein S-acyltransferase 14 (307 aa).

Transmembrane regions (helical) follow at residues 22–42 (LGSI…YAVV) and 63–83 (ILIL…SVVF). The region spanning 127–177 (RFCRKCNQLKPSRCHHCSVCGRCVLKMDHHCVWVVNCVGALNYKYFLLFLF) is the DHHC domain. Catalysis depends on cysteine 157, which acts as the S-palmitoyl cysteine intermediate. 2 consecutive transmembrane segments (helical) span residues 171–191 (YFLL…LVLM) and 213–233 (TFLA…FLIM).

It belongs to the DHHC palmitoyltransferase family.

Its subcellular location is the golgi apparatus. It is found in the trans-Golgi network membrane. The catalysed reaction is L-cysteinyl-[protein] + hexadecanoyl-CoA = S-hexadecanoyl-L-cysteinyl-[protein] + CoA. Palmitoyl acyltransferase. The sequence is that of Probable protein S-acyltransferase 14 (PAT14) from Arabidopsis thaliana (Mouse-ear cress).